The primary structure comprises 235 residues: uncharacterized protein (235 aa).

Disordered stretches follow at residues 1 to 47 (MSHK…QSTN) and 78 to 128 (QEHH…KQPQ). The span at 20-33 (HPPGQSLSSISWSP) shows a compositional bias: polar residues. Residues 84–98 (QQQQQQRQNIRSQNS) show a composition bias toward low complexity. Residues 106–128 (VQESQWTSSASNSSLKKQEKQPQ) are compositionally biased toward polar residues.

This is an uncharacterized protein from Saccharomyces cerevisiae (strain ATCC 204508 / S288c) (Baker's yeast).